The chain runs to 194 residues: Translationally-controlled tumor protein homolog 2 (194 aa).

The 194-residue stretch at 1–194 (MKLYKDLIGN…IKYGLLQVDV (194 aa)) folds into the TCTP domain.

It belongs to the TCTP family.

The protein localises to the cytoplasm. Functionally, involved in calcium binding and microtubule stabilization. This chain is Translationally-controlled tumor protein homolog 2, found in Dictyostelium discoideum (Social amoeba).